A 108-amino-acid polypeptide reads, in one-letter code: Insulin (108 aa).

An N-terminal signal peptide occupies residues 1-21 (MAVWLQAGALLVLLVVSSVST). 3 disulfides stabilise this stretch: cysteine 30–cysteine 94, cysteine 42–cysteine 107, and cysteine 93–cysteine 98. A propeptide spans 54–84 (DVEPLLGFLPPKSAQETEVADFAFKDHAELI) (c peptide).

Belongs to the insulin family. In terms of assembly, heterodimer of a B chain and an A chain linked by two disulfide bonds.

The protein resides in the secreted. Its function is as follows. Insulin decreases blood glucose concentration. It increases cell permeability to monosaccharides, amino acids and fatty acids. It accelerates glycolysis, the pentose phosphate cycle, and glycogen synthesis in liver. The chain is Insulin (ins) from Danio rerio (Zebrafish).